We begin with the raw amino-acid sequence, 312 residues long: uncharacterized protein (312 aa).

8 consecutive transmembrane segments (helical) span residues 4–24, 45–65, 75–95, 117–137, 171–191, 217–237, 253–275, and 280–299; these read IFLA…KVIF, LITP…PLVL, IAGI…AVML, VILA…NLIW, GLGV…IQFL, TSMT…GVMI, AFIF…PLGI, and LLLI…AHTW.

It localises to the cell membrane. This is an uncharacterized protein from Bacillus subtilis (strain 168).